We begin with the raw amino-acid sequence, 105 residues long: Ferredoxin--nitrite reductase, chloroplastic (105 aa).

[4Fe-4S] cluster contacts are provided by C28 and C32. Residue C32 participates in siroheme binding.

This sequence belongs to the nitrite and sulfite reductase 4Fe-4S domain family. As to quaternary structure, monomer. It depends on siroheme as a cofactor. The cofactor is [4Fe-4S] cluster. In terms of tissue distribution, highest expression in roots and hypocotyls. Some expression in cotyledonary whorls.

Its subcellular location is the plastid. It is found in the chloroplast. The enzyme catalyses 6 oxidized [2Fe-2S]-[ferredoxin] + NH4(+) + 2 H2O = nitrite + 6 reduced [2Fe-2S]-[ferredoxin] + 8 H(+). Its pathway is nitrogen metabolism; nitrate reduction (assimilation). The chain is Ferredoxin--nitrite reductase, chloroplastic (NIR) from Pinus sylvestris (Scotch pine).